The sequence spans 34 residues: Photosystem II reaction center protein M (34 aa).

The chain crosses the membrane as a helical span at residues 5–25; sequence ILAFSATALLILFPTALLLIL.

This sequence belongs to the PsbM family. As to quaternary structure, PSII is composed of 1 copy each of membrane proteins PsbA, PsbB, PsbC, PsbD, PsbE, PsbF, PsbH, PsbI, PsbJ, PsbK, PsbL, PsbM, PsbT, PsbX, PsbY, PsbZ, Psb30/Ycf12, at least 3 peripheral proteins of the oxygen-evolving complex and a large number of cofactors. It forms dimeric complexes.

Its subcellular location is the plastid membrane. Its function is as follows. One of the components of the core complex of photosystem II (PSII). PSII is a light-driven water:plastoquinone oxidoreductase that uses light energy to abstract electrons from H(2)O, generating O(2) and a proton gradient subsequently used for ATP formation. It consists of a core antenna complex that captures photons, and an electron transfer chain that converts photonic excitation into a charge separation. This subunit is found at the monomer-monomer interface. The sequence is that of Photosystem II reaction center protein M from Cuscuta gronovii (Common dodder).